The following is a 314-amino-acid chain: tRNA pseudouridine synthase B (314 aa).

H43 contributes to the substrate binding site. The active-site Nucleophile is D48. The substrate site is built by Y76, Y179, and L200.

The protein belongs to the pseudouridine synthase TruB family. Type 1 subfamily.

It catalyses the reaction uridine(55) in tRNA = pseudouridine(55) in tRNA. Functionally, responsible for synthesis of pseudouridine from uracil-55 in the psi GC loop of transfer RNAs. The chain is tRNA pseudouridine synthase B from Salmonella choleraesuis (strain SC-B67).